The primary structure comprises 168 residues: Large ribosomal subunit protein bL17 (168 aa).

The interval 124–168 is disordered; the sequence is QATGEAEAATKRAAKDAEGSAEVSEAKVDTTKADDEAAAEESKDA. Positions 131–168 are enriched in basic and acidic residues; the sequence is AATKRAAKDAEGSAEVSEAKVDTTKADDEAAAEESKDA.

Belongs to the bacterial ribosomal protein bL17 family. As to quaternary structure, part of the 50S ribosomal subunit. Contacts protein L32.

The polypeptide is Large ribosomal subunit protein bL17 (Streptomyces coelicolor (strain ATCC BAA-471 / A3(2) / M145)).